We begin with the raw amino-acid sequence, 467 residues long: MSAQTLFEKIWNAHLIRTDEDGTSLIYIDRHLVHEVTSPQAFEGLRLAGRKVRHPEATFAVPDHNVPTKDLAGGIKDPVSKLQVDTLASNCQAFGITEFGVGDLRQGVVHVMAPEQGISLPGFTMVCGDSHTATHGAFGALAFGIGTSEVEHVLATQTLMQKKPKTMLIQVEGELPAGSTAKDIILYIIGNIGTAGGTGYVLEFGGSAIQALSMEGRMTVCNMAIEAGARAGMVAVDEKTIAYVQGRPYAPKGEAWEKAVAQWQTLKSDEGAPFDAVVTLDARNIAPQVTWGTSPELVAPVDGCVPNPTDEPNGVKRGAMEKALAYMGLQAGTPMTEIAVDKVFIGSCTNSRIEDLRAAAVAVAGKKVAASIKLALVVPGTGLVKQQAEQEGLDKIFMEAGFEWREPGCSMCLAMNNDVLEPGERCASTSNRNFEGRQGKDSRTHLVSPAMAAAAAIAGHFVDIRNG.

Residues C348, C409, and C412 each contribute to the [4Fe-4S] cluster site.

This sequence belongs to the aconitase/IPM isomerase family. LeuC type 1 subfamily. Heterodimer of LeuC and LeuD. Requires [4Fe-4S] cluster as cofactor.

The enzyme catalyses (2R,3S)-3-isopropylmalate = (2S)-2-isopropylmalate. Its pathway is amino-acid biosynthesis; L-leucine biosynthesis; L-leucine from 3-methyl-2-oxobutanoate: step 2/4. Functionally, catalyzes the isomerization between 2-isopropylmalate and 3-isopropylmalate, via the formation of 2-isopropylmaleate. The chain is 3-isopropylmalate dehydratase large subunit from Magnetococcus marinus (strain ATCC BAA-1437 / JCM 17883 / MC-1).